The chain runs to 640 residues: Envelope glycoprotein (640 aa).

A signal peptide spans 1-32 (MACSTFSKPLKDKINPWGPLIILGILIRAGVS). The receptor-binding domain (RBD) stretch occupies residues 32–236 (SVQHDSPHKV…RVLNIGPRVP (205 aa)). The Extracellular portion of the chain corresponds to 33–584 (VQHDSPHKVF…FNRSPWFTTL (552 aa)). Asn-43 and Asn-58 each carry an N-linked (GlcNAc...) asparagine; by host glycan. 2 disulfide bridges follow: Cys-113-Cys-130 and Cys-122-Cys-135. Residues 259-284 (RPPQPPPPGAASIVPETAPPSQQPGT) form a disordered region. Residue Asn-300 is glycosylated (N-linked (GlcNAc...) asparagine; by host). Cystine bridges form between Cys-310-Cys-313, Cys-310-Cys-537, and Cys-529-Cys-536. The CXXC motif lies at 310-313 (CWLC). N-linked (GlcNAc...) asparagine; by host glycosylation is found at Asn-332, Asn-339, Asn-372, and Asn-408. A fusion peptide region spans residues 446–466 (VSLTLALLLGGLTMGGIAAGV). Residues 477–511 (QQFQQLHAAVQDDLKEVEKSITNLEKSLTSLSEVV) are a coiled coil. Residues 512–528 (LQNRRGLDLLFLKEGGL) are immunosuppression. Residues 529–537 (CAALKEECC) carry the CX6CC motif. A helical transmembrane segment spans residues 585–605 (ISTIMGPLIILLLILLFGPCI). A lipid anchor (S-palmitoyl cysteine; by host) is attached at Cys-604. Residues 606 to 640 (LNRLVQFVKDRISVVQALVLTQQYHQLKPLEYEPQ) lie on the Cytoplasmic side of the membrane. A YXXL motif; contains endocytosis signal motif is present at residues 629 to 632 (YHQL).

As to quaternary structure, the mature envelope protein (Env) consists of a trimer of SU-TM heterodimers attached by a labile interchain disulfide bond. Post-translationally, specific enzymatic cleavages in vivo yield mature proteins. Envelope glycoproteins are synthesized as an inactive precursor that is N-glycosylated and processed likely by host cell furin or by a furin-like protease in the Golgi to yield the mature SU and TM proteins. The cleavage site between SU and TM requires the minimal sequence [KR]-X-[KR]-R. The R-peptide is released from the C-terminus of the cytoplasmic tail of the TM protein upon particle formation as a result of proteolytic cleavage by the viral protease. Cleavage of this peptide is required for TM to become fusogenic. In terms of processing, the CXXC motif is highly conserved across a broad range of retroviral envelope proteins. It is thought to participate in the formation of a labile disulfide bond possibly with the CX6CC motif present in the transmembrane protein. Isomerization of the intersubunit disulfide bond to an SU intrachain disulfide bond is thought to occur upon receptor recognition in order to allow membrane fusion. The transmembrane protein is palmitoylated. Post-translationally, the R-peptide is palmitoylated.

The protein resides in the virion membrane. It is found in the host cell membrane. Functionally, the surface protein (SU) attaches the virus to the host cell by binding to its receptor. This interaction triggers the refolding of the transmembrane protein (TM) and is thought to activate its fusogenic potential by unmasking its fusion peptide. Fusion occurs at the host cell plasma membrane. In terms of biological role, the transmembrane protein (TM) acts as a class I viral fusion protein. Under the current model, the protein has at least 3 conformational states: pre-fusion native state, pre-hairpin intermediate state, and post-fusion hairpin state. During viral and target cell membrane fusion, the coiled coil regions (heptad repeats) assume a trimer-of-hairpins structure, positioning the fusion peptide in close proximity to the C-terminal region of the ectodomain. The formation of this structure appears to drive apposition and subsequent fusion of viral and target cell membranes. Membranes fusion leads to delivery of the nucleocapsid into the cytoplasm. The protein is Envelope glycoprotein (env) of Rauscher mink cell focus-inducing virus.